We begin with the raw amino-acid sequence, 174 residues long: Guided entry of tail-anchored proteins factor 1 (174 aa).

Topologically, residues 1 to 8 (MSSAAADH) are lumenal. A helical membrane pass occupies residues 9 to 29 (WAWLLVLSFVFGCNVLRILLP). Residues 30 to 99 (SFSSFMSRVL…VKARTAQLAK (70 aa)) lie on the Cytoplasmic side of the membrane. Residues 39-94 (LQKDAEQESQMRAEIQDMKQELSTVNMMDEFARYARLERKINKMTDKLKTHVKART) are a coiled coil. Positions 39–97 (LQKDAEQESQMRAEIQDMKQELSTVNMMDEFARYARLERKINKMTDKLKTHVKARTAQL) are interaction with GET3/TRC40. The chain crosses the membrane as a helical span at residues 100 to 120 (IKWVISVAFYVLQAALMISLI). Residues 121–148 (WKYYSVPVAVVPSKWITPLDRLVAFPTR) lie on the Lumenal side of the membrane. The helical transmembrane segment at 149–169 (VAGGVGITCWILVCNKVVAIV) threads the bilayer. Over 170–174 (LHPFS) the chain is Cytoplasmic.

Belongs to the WRB/GET1 family. Component of the Golgi to ER traffic (GET) complex, which is composed of GET1/WRB, CAMLG/GET2 and GET3/TRC40. Within the complex, GET1 and CAMLG form a heterotetramer which is stabilized by phosphatidylinositol binding and which binds to the GET3 homodimer. Interacts with CAMLG (via C-terminus). GET3 shows a higher affinity for CAMLG than for GET1.

The protein localises to the endoplasmic reticulum membrane. Functionally, required for the post-translational delivery of tail-anchored (TA) proteins to the endoplasmic reticulum (ER). Together with CAMLG/GET2, acts as a membrane receptor for soluble GET3/TRC40, which recognizes and selectively binds the transmembrane domain of TA proteins in the cytosol. Required to ensure correct topology and ER insertion of CAMLG. The chain is Guided entry of tail-anchored proteins factor 1 from Homo sapiens (Human).